The following is a 196-amino-acid chain: Fucoxanthin-chlorophyll a-c binding protein A, chloroplastic (196 aa).

Residues 1 to 31 (MKFAVFASLLASRAAFAPAQQSARTSVATNM) constitute a chloroplast transit peptide. Transmembrane regions (helical) follow at residues 73-94 (ICMLAVAGYLTQEAGIRLPGDI), 114-134 (VPGAGIAQIIAFIGFFEIAVM), and 174-196 (GRAAQMGILALMVHEQLGVSILP).

The protein belongs to the fucoxanthin chlorophyll protein family. As to quaternary structure, the LHC complex of chromophytic algae is composed of fucoxanthin, chlorophyll A and C bound non-covalently by fucoxanthin chlorophyll proteins (FCPs). The ratio of the pigments in LHC; fucoxanthin: chlorophyll C: chlorophyll A; (0.6-1): (0.1-0.3): (1).

It is found in the plastid. The protein resides in the chloroplast thylakoid membrane. In terms of biological role, the light-harvesting complex (LHC) functions as a light receptor, it captures and delivers excitation energy to photosystems with which it is closely associated. Energy is transferred from the carotenoid and chlorophyll C (or B) to chlorophyll A and the photosynthetic reaction centers where it is used to synthesize ATP and reducing power. This is Fucoxanthin-chlorophyll a-c binding protein A, chloroplastic (FCPA) from Phaeodactylum tricornutum (Diatom).